Consider the following 186-residue polypeptide: Tumor necrosis factor alpha-induced protein 8-like protein 1 (186 aa).

This sequence belongs to the TNFAIP8 family. Interacts with FBXW5; TNFAIP8L1 competes with TSC2 to bind FBXW5 increasing TSC2 stability by preventing its ubiquitination. As to expression, high expression detected in most carcinoma cell lines, especially in cells transformed with virus genomes.

Its subcellular location is the cytoplasm. In terms of biological role, acts as a negative regulator of mTOR activity. The sequence is that of Tumor necrosis factor alpha-induced protein 8-like protein 1 (TNFAIP8L1) from Homo sapiens (Human).